Here is a 46-residue protein sequence, read N- to C-terminus: Defensin-like protein AX1 (46 aa).

Cystine bridges form between Cys3–Cys46, Cys14–Cys34, Cys20–Cys40, and Cys24–Cys42.

Leaves and flowers.

In terms of biological role, strong inhibiting activity against C.beticola and other filamentous fungi. Little or no effect against bacteria. In Beta vulgaris (Sugar beet), this protein is Defensin-like protein AX1.